A 247-amino-acid chain; its full sequence is Cell division protein ZapD (247 aa).

This sequence belongs to the ZapD family. Interacts with FtsZ.

Its subcellular location is the cytoplasm. Functionally, cell division factor that enhances FtsZ-ring assembly. Directly interacts with FtsZ and promotes bundling of FtsZ protofilaments, with a reduction in FtsZ GTPase activity. In Salmonella agona (strain SL483), this protein is Cell division protein ZapD.